A 60-amino-acid polypeptide reads, in one-letter code: uncharacterized protein (60 aa).

Its subcellular location is the host cytoplasm. This is an uncharacterized protein from Escherichia phage Mu (Bacteriophage Mu).